Consider the following 141-residue polypeptide: Hemoglobin subunit alpha-A (141 aa).

A Globin domain is found at 1–141 (VLSGSDKTNV…VGNVLTAKYR (141 aa)). Position 58 (His-58) interacts with O2. His-87 lines the heme b pocket.

Belongs to the globin family. As to quaternary structure, heterotetramer of two alpha chains and two beta chains. In terms of tissue distribution, red blood cells.

In terms of biological role, involved in oxygen transport from the lung to the various peripheral tissues. The sequence is that of Hemoglobin subunit alpha-A (HBAA) from Chroicocephalus ridibundus (Black-headed gull).